We begin with the raw amino-acid sequence, 453 residues long: Malate dehydrogenase [NADP], chloroplastic (453 aa).

A chloroplast-targeting transit peptide spans 1-68 (MAVVKLSPWA…RLSSPASIRC (68 aa)). Residues Cys88 and Cys93 are joined by a disulfide bond. 117–123 (GAAGMIS) serves as a coordination point for NADP(+). 2 residues coordinate substrate: Arg198 and Arg204. NADP(+)-binding positions include Asn211, Gln218, and 235–237 (VGN). Substrate-binding residues include Asn237 and Arg268. The active-site Proton acceptor is the His293. A disulfide bridge links Cys429 with Cys441.

This sequence belongs to the LDH/MDH superfamily. MDH type 2 family. As to quaternary structure, homodimer.

It is found in the plastid. It localises to the chloroplast. The catalysed reaction is (S)-malate + NADP(+) = oxaloacetate + NADPH + H(+). With respect to regulation, chloroplast NADP-MDH is activated upon illumination. In order to be enzymatically active, disulfide bridges on the protein must be reduced by thioredoxin which receives electrons from ferredoxin and the electron transport system of photosynthesis. The chloroplastic, NADP-dependent form is essential for the photosynthesis C4 cycle, which allows plants to circumvent the problem of photorespiration. In C4 plants, NADP-MDH activity acts to convert oxaloacetate to malate in chloroplasts of mesophyll cells for transport to the bundle sheath cells. This is Malate dehydrogenase [NADP], chloroplastic from Flaveria bidentis (Coastal plain yellowtops).